The sequence spans 1555 residues: Protein TASOR (1555 aa).

5 disordered regions span residues 1-74, 645-711, 744-773, 870-911, and 1390-1462; these read MEEN…DKRA, QKKK…RQET, QNST…GQDQ, ALPN…TTPS, and NQGD…PTLD. The segment covering 35-47 has biased composition (polar residues); the sequence is VQQTLKRTNSTES. A compositionally biased stretch (basic residues) spans 61–71; the sequence is RRFQIPRKSRD. Residues 667–688 are compositionally biased toward basic and acidic residues; that stretch reads DRQSEKAWKHRKCEENVHHDNE. Composition is skewed to polar residues over residues 692–702 and 744–761; these read SAQSLISSLGG and QNST…LSQA. The span at 888-904 shows a compositional bias: basic and acidic residues; sequence PLHETERQRPRHDRDYC. Over residues 1402-1417 the composition is skewed to acidic residues; sequence SKEEEDMSLDSEDDTP. Positions 1448–1458 are enriched in polar residues; that stretch reads ESPSTLNQGKT.

It belongs to the TASOR family. In terms of assembly, component of the HUSH complex.

The protein resides in the nucleus. It is found in the chromosome. Functionally, component of the HUSH complex, a multiprotein complex that mediates epigenetic repression. The HUSH complex is recruited to genomic loci rich in H3K9me3 and is probably required to maintain transcriptional silencing by promoting further deposition of H3K9me3. This chain is Protein TASOR, found in Xenopus laevis (African clawed frog).